Consider the following 35-residue polypeptide: Photosystem II reaction center protein T (35 aa).

Residues A3–F23 form a helical membrane-spanning segment.

The protein belongs to the PsbT family. As to quaternary structure, PSII is composed of 1 copy each of membrane proteins PsbA, PsbB, PsbC, PsbD, PsbE, PsbF, PsbH, PsbI, PsbJ, PsbK, PsbL, PsbM, PsbT, PsbY, PsbZ, Psb30/Ycf12, at least 3 peripheral proteins of the oxygen-evolving complex and a large number of cofactors. It forms dimeric complexes.

It is found in the plastid. The protein resides in the chloroplast thylakoid membrane. Found at the monomer-monomer interface of the photosystem II (PS II) dimer, plays a role in assembly and dimerization of PSII. PSII is a light-driven water plastoquinone oxidoreductase, using light energy to abstract electrons from H(2)O, generating a proton gradient subsequently used for ATP formation. The sequence is that of Photosystem II reaction center protein T from Metasequoia glyptostroboides (Dawn redwood).